Consider the following 241-residue polypeptide: tRNA (guanine-N(7)-)-methyltransferase (241 aa).

S-adenosyl-L-methionine contacts are provided by glycine 61, glutamate 84, arginine 86, asparagine 117, alanine 118, and leucine 137. Residue aspartate 140 is part of the active site. Residues 141–149 (PHFKKTKHK) are alphaC helix. Positions 215 and 217 each coordinate S-adenosyl-L-methionine. The interval 215–223 (TEEGKKVQR) is alpha6 helix.

This sequence belongs to the class I-like SAM-binding methyltransferase superfamily. TrmB family. In terms of assembly, catalytic component of the METTL1-WDR4 complex, composed of mettl1 and wdr4.

The protein resides in the nucleus. It catalyses the reaction guanosine(46) in tRNA + S-adenosyl-L-methionine = N(7)-methylguanosine(46) in tRNA + S-adenosyl-L-homocysteine. The catalysed reaction is a guanosine in mRNA + S-adenosyl-L-methionine = an N(7)-methylguanosine in mRNA + S-adenosyl-L-homocysteine. It carries out the reaction a guanosine in miRNA + S-adenosyl-L-methionine = an N(7)-methylguanosine in miRNA + S-adenosyl-L-homocysteine. It functions in the pathway tRNA modification; N(7)-methylguanine-tRNA biosynthesis. Functionally, catalytic component of METTL1-WDR4 methyltransferase complex that mediates the formation of N(7)-methylguanine in a subset of RNA species, such as tRNAs, mRNAs and microRNAs (miRNAs). Catalyzes the formation of N(7)-methylguanine at position 46 (m7G46) in a large subset of tRNAs that contain the 5'-RAGGU-3' motif within the variable loop. M7G46 interacts with C13-G22 in the D-loop to stabilize tRNA tertiary structure and protect tRNAs from decay. Also acts as a methyltransferase for a subset of internal N(7)-methylguanine in mRNAs. Internal N(7)-methylguanine methylation of mRNAs in response to stress promotes their relocalization to stress granules, thereby suppressing their translation. Also methylates a specific subset of miRNAs. This is tRNA (guanine-N(7)-)-methyltransferase (mettl1) from Danio rerio (Zebrafish).